A 158-amino-acid polypeptide reads, in one-letter code: Cyclic pyranopterin monophosphate synthase (158 aa).

Substrate contacts are provided by residues 74–76 (MCH) and 112–113 (ME). D127 is an active-site residue.

This sequence belongs to the MoaC family. Homohexamer; trimer of dimers.

The catalysed reaction is (8S)-3',8-cyclo-7,8-dihydroguanosine 5'-triphosphate = cyclic pyranopterin phosphate + diphosphate. It participates in cofactor biosynthesis; molybdopterin biosynthesis. In terms of biological role, catalyzes the conversion of (8S)-3',8-cyclo-7,8-dihydroguanosine 5'-triphosphate to cyclic pyranopterin monophosphate (cPMP). This chain is Cyclic pyranopterin monophosphate synthase, found in Helicobacter pylori (strain HPAG1).